A 341-amino-acid polypeptide reads, in one-letter code: Eukaryotic translation initiation factor 2 subunit 1 (341 aa).

An S1 motif domain is found at 16–87 (EDVVMVNVLS…EKGYIDLSKR (72 aa)). The residue at position 51 (Ser51) is a Phosphoserine. The interval 293-341 (AENAQVAGDDDEEDGADQEGMQFDPEKEFNHKGSGAGRANEEDEEEEED) is disordered. The segment covering 300-309 (GDDDEEDGAD) has biased composition (acidic residues).

It belongs to the eIF-2-alpha family. As to quaternary structure, eukaryotic translation initiation factor 2 eIF2 is a heterotrimeric complex composed of an alpha, a beta and a gamma subunit. Phosphorylation of eIF-2-alpha impairs the recycling of eIF-2 between successive rounds of initiation and thus leads to inhibition of translation.

The protein resides in the cytoplasm. It is found in the cytosol. In terms of biological role, eIF-2 functions in the early steps of protein synthesis by forming a ternary complex with GTP and initiator tRNA. This pre-initiation complex mediates ribosomal recognition of a start codon during the scanning process of the leader region. The chain is Eukaryotic translation initiation factor 2 subunit 1 from Drosophila melanogaster (Fruit fly).